The chain runs to 154 residues: MSAAAGKTLADYKAPYPKPTSRQRRYVILLDPKGDNAELNDYKVELIPGRVKLLDGANHYFLGGKIEEKTIDGWGYPYYVVTLAEMAGTAMLPLGNAAHKKLRFVPLHTSSLYRYNSKLPIVVYVPKDGVLRYRIWTAKLSGRGKAKSIKAKEM.

This sequence belongs to the protease inhibitor I11 (ecotin) family.

This is Ecotin-like protein 2 from Leishmania braziliensis.